Here is a 298-residue protein sequence, read N- to C-terminus: MSSPDNSSPSLRIPPWLRVKLPCSHTFADTRALVEGLGLNTVCNSAKCPNMFECFSSGTATFLILGNVCTRNCAFCNITPGHVSPPDPDEPRRVAEAAARLALRHVVVTSVTRDDLDDGGAAHFAATITRLRAALPAATVEVLIPDFRGDHAALRTVMAAAPHIVNHNVETPPAHYARIRPQADYRQSLELLRRVKAAGGVAKSGLMVGLGENDTEVEGVLADLADCGCDIVTVGQYMRPSRQHPPVERYVHPDTFESFAACGRGMGIPFVFSAPLVRSSYNAESAYNALCTLRRKPA.

Residues cysteine 43, cysteine 48, cysteine 54, cysteine 69, cysteine 73, cysteine 76, and serine 280 each contribute to the [4Fe-4S] cluster site. One can recognise a Radical SAM core domain in the interval 55–269; sequence FSSGTATFLI…AACGRGMGIP (215 aa).

It belongs to the radical SAM superfamily. Lipoyl synthase family. It depends on [4Fe-4S] cluster as a cofactor.

It is found in the cytoplasm. It catalyses the reaction [[Fe-S] cluster scaffold protein carrying a second [4Fe-4S](2+) cluster] + N(6)-octanoyl-L-lysyl-[protein] + 2 oxidized [2Fe-2S]-[ferredoxin] + 2 S-adenosyl-L-methionine + 4 H(+) = [[Fe-S] cluster scaffold protein] + N(6)-[(R)-dihydrolipoyl]-L-lysyl-[protein] + 4 Fe(3+) + 2 hydrogen sulfide + 2 5'-deoxyadenosine + 2 L-methionine + 2 reduced [2Fe-2S]-[ferredoxin]. It functions in the pathway protein modification; protein lipoylation via endogenous pathway; protein N(6)-(lipoyl)lysine from octanoyl-[acyl-carrier-protein]: step 2/2. In terms of biological role, catalyzes the radical-mediated insertion of two sulfur atoms into the C-6 and C-8 positions of the octanoyl moiety bound to the lipoyl domains of lipoate-dependent enzymes, thereby converting the octanoylated domains into lipoylated derivatives. This chain is Lipoyl synthase, found in Nitratidesulfovibrio vulgaris (strain DP4) (Desulfovibrio vulgaris).